We begin with the raw amino-acid sequence, 222 residues long: Glutathione-specific gamma-glutamylcyclotransferase 1 (222 aa).

Low complexity predominate over residues 1–22 (MKQESAAPNTPPTSQSPTPSAQ). The interval 1–24 (MKQESAAPNTPPTSQSPTPSAQFP) is disordered. 35–40 (IFGYGS) is a substrate binding site. Glu115 functions as the Proton acceptor in the catalytic mechanism.

The protein belongs to the gamma-glutamylcyclotransferase family. ChaC subfamily. In terms of assembly, interacts with NOTCH1 (via extracellular region).

Its subcellular location is the cytoplasm. The protein localises to the cytosol. It localises to the golgi apparatus. It is found in the trans-Golgi network. It catalyses the reaction glutathione = L-cysteinylglycine + 5-oxo-L-proline. Catalyzes the cleavage of glutathione into 5-oxo-L-proline and a Cys-Gly dipeptide. Acts specifically on glutathione, but not on other gamma-glutamyl peptides. Glutathione depletion is an important factor for apoptosis initiation and execution. Acts as a pro-apoptotic component of the unfolded protein response pathway by mediating the pro-apoptotic effects of the ATF4-ATF3-DDIT3/CHOP cascade. Negative regulator of Notch signaling pathway involved in embryonic neurogenesis: acts by inhibiting Notch cleavage by furin, maintaining Notch in an immature inactive form, thereby promoting neurogenesis in embryos. The protein is Glutathione-specific gamma-glutamylcyclotransferase 1 of Homo sapiens (Human).